The sequence spans 127 residues: uncharacterized protein (127 aa).

Residues 1-17 (MQGSVQIQKGNISSSYT) are compositionally biased toward polar residues. Residues 1–36 (MQGSVQIQKGNISSSYTPEKHPSHPTSANGSMSPKR) are disordered.

This is an uncharacterized protein from Treponema pallidum (strain Nichols).